Consider the following 161-residue polypeptide: MKKFFISVVFIVLLTFTTFINSATAAKLDDNVRTLPLNEDKEVVLTIKEYTQGKREFTNVCSQCHVGGITKTNPDVSLDPETLALAYPARDNIEGLIDYMQNPTTYDGFIEISEFHPSIKSADIYPEMRNLTEDDLYAIAGYILVQPKVLGKQWGGGKIFR.

The signal sequence occupies residues 1 to 25; that stretch reads MKKFFISVVFIVLLTFTTFINSATA. 4 residues coordinate heme c: cysteine 61, cysteine 64, histidine 65, and histidine 116.

It belongs to the cytochrome c family. PsbV subfamily. PSII is composed of 1 copy each of membrane proteins PsbA, PsbB, PsbC, PsbD, PsbE, PsbF, PsbH, PsbI, PsbJ, PsbK, PsbL, PsbM, PsbT, PsbX, PsbY, PsbZ, Psb30/Ycf12, peripheral proteins PsbO, CyanoQ (PsbQ), PsbU, PsbV and a large number of cofactors. It forms dimeric complexes. Heme c serves as cofactor.

The protein localises to the cellular thylakoid membrane. One of the extrinsic, lumenal subunits of photosystem II (PSII). PSII is a light-driven water plastoquinone oxidoreductase, using light energy to abstract electrons from H(2)O, generating a proton gradient subsequently used for ATP formation. The extrinsic proteins stabilize the structure of photosystem II oxygen-evolving complex (OEC), the ion environment of oxygen evolution and protect the OEC against heat-induced inactivation. Low-potential cytochrome c that plays a role in the OEC of PSII. The polypeptide is Photosystem II extrinsic protein V (Trichodesmium erythraeum (strain IMS101)).